The following is a 391-amino-acid chain: Probable malate dehydrogenase 1 (391 aa).

68-74 (GAAGQIA) provides a ligand contact to NAD(+). 2 residues coordinate substrate: arginine 149 and arginine 155. NAD(+) is bound by residues asparagine 162, glutamine 169, and 186–188 (VGN). Asparagine 188 and arginine 219 together coordinate substrate. The active-site Proton acceptor is the histidine 244.

Belongs to the LDH/MDH superfamily. MDH type 2 family. Homodimer.

It carries out the reaction (S)-malate + NAD(+) = oxaloacetate + NADH + H(+). In terms of biological role, catalyzes the reversible oxidation of malate to oxaloacetate. This Dictyostelium discoideum (Social amoeba) protein is Probable malate dehydrogenase 1 (mdhA).